Consider the following 461-residue polypeptide: Photosystem II CP43 reaction center protein (461 aa).

Positions M1–E2 are excised as a propeptide. The residue at position 3 (T3) is an N-acetylthreonine. T3 carries the post-translational modification Phosphothreonine. The next 5 helical transmembrane spans lie at L57 to A81, L122 to N143, K166 to T188, K243 to S263, and W279 to A300. Residue E355 coordinates [CaMn4O5] cluster. Residues R435–P459 form a helical membrane-spanning segment.

This sequence belongs to the PsbB/PsbC family. PsbC subfamily. PSII is composed of 1 copy each of membrane proteins PsbA, PsbB, PsbC, PsbD, PsbE, PsbF, PsbH, PsbI, PsbJ, PsbK, PsbL, PsbM, PsbT, PsbX, PsbY, PsbZ, Psb30/Ycf12, at least 3 peripheral proteins of the oxygen-evolving complex and a large number of cofactors. It forms dimeric complexes. Requires Binds multiple chlorophylls and provides some of the ligands for the Ca-4Mn-5O cluster of the oxygen-evolving complex. It may also provide a ligand for a Cl- that is required for oxygen evolution. PSII binds additional chlorophylls, carotenoids and specific lipids. as cofactor.

Its subcellular location is the plastid. It localises to the chloroplast thylakoid membrane. One of the components of the core complex of photosystem II (PSII). It binds chlorophyll and helps catalyze the primary light-induced photochemical processes of PSII. PSII is a light-driven water:plastoquinone oxidoreductase, using light energy to abstract electrons from H(2)O, generating O(2) and a proton gradient subsequently used for ATP formation. This Lotus japonicus (Lotus corniculatus var. japonicus) protein is Photosystem II CP43 reaction center protein.